A 66-amino-acid chain; its full sequence is MPKLKTKSSVKKRFSVTATGKIKSTQSAKRHGMTKRSKRSIRVQRGTAIMNSSDSRIVKLFMPYSR.

The tract at residues 20–40 is disordered; it reads GKIKSTQSAKRHGMTKRSKRS. The segment covering 28–40 has biased composition (basic residues); the sequence is AKRHGMTKRSKRS.

The protein belongs to the bacterial ribosomal protein bL35 family.

This is Large ribosomal subunit protein bL35 from Ehrlichia chaffeensis (strain ATCC CRL-10679 / Arkansas).